A 110-amino-acid chain; its full sequence is U1-lycotoxin-Ls1jj (110 aa).

An N-terminal signal peptide occupies residues 1-20 (MKFVLLFGVLLVTLFSYSSA). Positions 21-44 (EMLDDFDQADEDELLSLIEKEEAR) are excised as a propeptide. Disulfide bonds link Cys47–Cys62, Cys54–Cys71, Cys61–Cys89, and Cys73–Cys87.

The protein belongs to the neurotoxin 19 (CSTX) family. 03 subfamily. As to expression, expressed by the venom gland.

It is found in the secreted. This is U1-lycotoxin-Ls1jj from Lycosa singoriensis (Wolf spider).